Here is a 345-residue protein sequence, read N- to C-terminus: Nicotinate-nucleotide--dimethylbenzimidazole phosphoribosyltransferase (345 aa).

Glutamate 312 acts as the Proton acceptor in catalysis.

It belongs to the CobT family.

It carries out the reaction 5,6-dimethylbenzimidazole + nicotinate beta-D-ribonucleotide = alpha-ribazole 5'-phosphate + nicotinate + H(+). It participates in nucleoside biosynthesis; alpha-ribazole biosynthesis; alpha-ribazole from 5,6-dimethylbenzimidazole: step 1/2. Catalyzes the synthesis of alpha-ribazole-5'-phosphate from nicotinate mononucleotide (NAMN) and 5,6-dimethylbenzimidazole (DMB). This chain is Nicotinate-nucleotide--dimethylbenzimidazole phosphoribosyltransferase, found in Bacteroides fragilis (strain YCH46).